The chain runs to 822 residues: Integrator complex assembly factor BRAT1 (822 aa).

The tract at residues 100 to 200 is required for interaction with NDFIP1; sequence LGLFGESGAP…WPMCAQKIVN (101 aa). HEAT repeat units lie at residues 495–531 and 544–576; these read LLFL…IRHW and SEVP…SSQG. Phosphoserine is present on Ser-743. A BRAT1-like motif motif is present at residues 820 to 822; the sequence is DCY. Residue Cys-821 coordinates Zn(2+).

This sequence belongs to the BRAT1 family. In terms of assembly, part of the multiprotein complex composed of BRAT1, WDR73, as well as integrator complex subunits INTS9 and INTS11. Interacts with BRCA1 and ATM. Interacts with MTOR and RPTOR. Interacts with NDFIP1. Interacts with SMC1A and PRKDC. In terms of processing, ubiquitinated by NEDD4, NEDD4L and ITCH; mono- and polyubiquitinated forms are detected. In terms of tissue distribution, high levels detected in the cortex and much lower levels detected in the cerebellum, spinal cord and lung (at protein level).

It localises to the nucleus. Its subcellular location is the cytoplasm. Its function is as follows. Component of a multiprotein complex required for the assembly of the RNA endonuclease module of the integrator complex. Associates with INTS9 and INTS11 in the cytoplasm and blocks the active site of INTS11 to inhibit the endonuclease activity of INTS11 before formation of the full integrator complex. Following dissociation of WDR73 of the complex, BRAT1 facilitates the nuclear import of the INTS9-INTS11 heterodimer. In the nucleus, INTS4 is integrated to the INTS9-INTS11 heterodimer and BRAT1 is released from the mature RNA endonuclease module by inositol hexakisphosphate (InsP6). BRAT1 is also involved in DNA damage response; activates kinases ATM, SMC1A and PRKDC by modulating their phosphorylation status following ionizing radiation (IR) stress. Plays a role in regulating mitochondrial function and cell proliferation. Required for protein stability of MTOR and MTOR-related proteins, and cell cycle progress by growth factors. The chain is Integrator complex assembly factor BRAT1 from Mus musculus (Mouse).